Consider the following 402-residue polypeptide: tRNA(Met) cytidine acetate ligase (402 aa).

ATP-binding positions include 7 to 20 (IAEY…HIHH), Gly102, Asn171, and Arg196.

Belongs to the TmcAL family.

The protein resides in the cytoplasm. It catalyses the reaction cytidine(34) in elongator tRNA(Met) + acetate + ATP = N(4)-acetylcytidine(34) in elongator tRNA(Met) + AMP + diphosphate. In terms of biological role, catalyzes the formation of N(4)-acetylcytidine (ac(4)C) at the wobble position of elongator tRNA(Met), using acetate and ATP as substrates. First activates an acetate ion to form acetyladenylate (Ac-AMP) and then transfers the acetyl group to tRNA to form ac(4)C34. The chain is tRNA(Met) cytidine acetate ligase from Clostridium acetobutylicum (strain ATCC 824 / DSM 792 / JCM 1419 / IAM 19013 / LMG 5710 / NBRC 13948 / NRRL B-527 / VKM B-1787 / 2291 / W).